Reading from the N-terminus, the 398-residue chain is Trans-2-enoyl-CoA reductase [NADH] (398 aa).

Residues 47–52 (GASSGF), 74–75 (YE), 111–112 (DA), and 139–140 (LA) contribute to the NAD(+) site. A substrate-binding site is contributed by Tyr-225. Tyr-235 functions as the Proton donor in the catalytic mechanism. NAD(+) is bound by residues Lys-244 and 274–276 (LVT).

The protein belongs to the TER reductase family. In terms of assembly, monomer.

It carries out the reaction a 2,3-saturated acyl-CoA + NAD(+) = a (2E)-enoyl-CoA + NADH + H(+). Its pathway is lipid metabolism; fatty acid biosynthesis. In terms of biological role, involved in the fatty acid synthesis (FAS II). Catalyzes the reduction of the carbon-carbon double bond of crotonyl-CoA to yield butyryl-CoA. This Clostridium acetobutylicum (strain ATCC 824 / DSM 792 / JCM 1419 / IAM 19013 / LMG 5710 / NBRC 13948 / NRRL B-527 / VKM B-1787 / 2291 / W) protein is Trans-2-enoyl-CoA reductase [NADH].